Consider the following 239-residue polypeptide: UDP-2,3-diacylglucosamine hydrolase (239 aa).

Residues Asp8, His10, Asp41, Asn78, and His113 each coordinate Mn(2+). 78–79 serves as a coordination point for substrate; it reads NR. Substrate-binding residues include Asp121, Ser159, Asn163, Lys166, and His194. Positions 194 and 196 each coordinate Mn(2+).

It belongs to the LpxH family. Mn(2+) is required as a cofactor.

The protein resides in the cell inner membrane. The enzyme catalyses UDP-2-N,3-O-bis[(3R)-3-hydroxytetradecanoyl]-alpha-D-glucosamine + H2O = 2-N,3-O-bis[(3R)-3-hydroxytetradecanoyl]-alpha-D-glucosaminyl 1-phosphate + UMP + 2 H(+). Its pathway is glycolipid biosynthesis; lipid IV(A) biosynthesis; lipid IV(A) from (3R)-3-hydroxytetradecanoyl-[acyl-carrier-protein] and UDP-N-acetyl-alpha-D-glucosamine: step 4/6. Hydrolyzes the pyrophosphate bond of UDP-2,3-diacylglucosamine to yield 2,3-diacylglucosamine 1-phosphate (lipid X) and UMP by catalyzing the attack of water at the alpha-P atom. Involved in the biosynthesis of lipid A, a phosphorylated glycolipid that anchors the lipopolysaccharide to the outer membrane of the cell. This Shewanella oneidensis (strain ATCC 700550 / JCM 31522 / CIP 106686 / LMG 19005 / NCIMB 14063 / MR-1) protein is UDP-2,3-diacylglucosamine hydrolase.